A 245-amino-acid chain; its full sequence is Transmembrane and ubiquitin-like domain-containing protein 1 (245 aa).

Positions 2–30 (ALIEGVGDEVTVLFAVLACLLVLALAWVS) are required to release iHOPS from membranes. The chain crosses the membrane as a helical span at residues 11–31 (VTVLFAVLACLLVLALAWVST). The segment at 33 to 100 (TTESTDPQPQ…ASTPPDSPQE (68 aa)) is disordered. A phosphoserine mark is found at S73, S97, and S126. In terms of domain architecture, Ubiquitin-like spans 102–175 (LLLRLKFLND…LHCHVSTRVG (74 aa)). A run of 2 helical transmembrane segments spans residues 194–214 (IGSL…YCQI) and 219–239 (FFPL…SLLA).

In terms of assembly, interacts with EEF1A1, CAMLG, GRIA2 and GRIP1. Interacts with NPM1 and CDKN2A; TMUB1 can enhance interaction between NPM1 and CDKN2A and is proposed to bridge the proteins; proposed to be mediated by iHOPS. Interacts with TUBG1. Interacts with ERLIN2 and AMFR; TMUB1 promotes the interaction of ERLIN2 with AMFR. In terms of processing, isoform 1 (lHOPS) is processed by regulated intramembrane proteolysis (RIP) in the N-terminus to release iHOPS from membranes. Post-translationally, isoform 2 seems to undergo a selective cleavage in the C-terminal region to release an additional cytoplasmic form. Expressed in adult brain; at protein level. Isoform 1 (lHOPS) is highly expressed in small intestine, stomach and epididymis. Isoform 2 (sHOPS) and iHOPS are abundantly expressed in brain, liver and adrenal gland.

It is found in the membrane. Its subcellular location is the postsynaptic cell membrane. The protein resides in the recycling endosome. It localises to the cytoplasm. The protein localises to the nucleus. It is found in the nucleolus. Its subcellular location is the cytoskeleton. The protein resides in the microtubule organizing center. It localises to the centrosome. Involved in sterol-regulated ubiquitination and degradation of HMG-CoA reductase HMGCR. Involved in positive regulation of AMPA-selective glutamate receptor GRIA2 recycling to the cell surface. Acts as a negative regulator of hepatocyte growth during regeneration. In terms of biological role, may contribute to the regulation of translation during cell-cycle progression. May contribute to the regulation of cell proliferation. May be involved in centrosome assembly. Modulates stabilization and nucleolar localization of tumor suppressor CDKN2A and enhances association between CDKN2A and NPM1. The sequence is that of Transmembrane and ubiquitin-like domain-containing protein 1 (Tmub1) from Mus musculus (Mouse).